A 71-amino-acid polypeptide reads, in one-letter code: UPF0352 protein Swoo_2786 (71 aa).

It belongs to the UPF0352 family.

The polypeptide is UPF0352 protein Swoo_2786 (Shewanella woodyi (strain ATCC 51908 / MS32)).